The chain runs to 1365 residues: MEFSIRKSPLSVQKVVKCMKMKQTPEILGSANGKTQNCEVNHECSVFLSKAQLSNSLQEGVMQKFNGHDALPFLPAEKLKDLTSCVFNGEPGAHDTKLCFEAQEVKGIGTPPNTTPIKNGSPEIKLKITKTYMNGKPLFESSICGDGAADVSQSEENEQKSDNKTRRNRKRSIKYDSLLEQGLVEAALVSKISSPADKKIPVKKESCPNTGRDRDLLLKYNVGDLVWSKVSGYPWWPCMVSADPLLHNHTKLKGQKKSARQYHVQFFGDAPERAWIFEKSLVAFEGEEQFEKLCQESAKQAPTKAEKIKLLKPISGRLRAQWEMGIVQAEEAASMSIEERKAKFTFLYVGDQLHLNPQVAKEAGIVTEPLGEMVDSSGASEEAAVDPGSVREEDIPTKRRRRTKRSSSAENQEGDPGTDKSTPPKMAEAEPKRGVGSPAGRKKSTGSAPRSRKGDSAAQFLVFCQKHRDEVVAEHPDASGEEIEELLGSQWSMLNEKQKARYNTKFSLMISAQSEEDSGNGNGKKRSHTKRADDPAEDVDVEDAPRKRLRADKHSLRKRETITDKTARTSSYKAIEAASSLKSQAATKNLSDACKPLKKRNRASATASSALGFNKSSSPSASLTEHEVSDSPGDEPSESPYESADETQTEASVSSKKSERGMAAKKEYVCQLCEKTGSLLLCEGPCCGAFHLACLGLSRRPEGRFTCTECASGIHSCFVCKESKMEVKRCVVNQCGKFYHEACVKKYPLTVFESRGFRCPLHSCMSCHASNPSNPRPSKGKMMRCVRCPVAYHGGDACLAAGCSVIASNSIICTGHFTARKGKRHHTHVNVSWCFVCSKGGSLLCCEACPAAFHPDCLNIEMPDGSWFCNDCRAGKKLHFQDIIWVKLGNYRWWPAEVCHPKNVPPNIQKMKHEIGEFPVFFFGSKDYYWTHQARVFPYMEGDRGSRYQGVRGIGRVFKNALQEAEARFNEVKLQREARETQESERKPPPYKHIKVNKPYGKVQIYTADISEIPKCNCKPTDENPCGSDSECLNRMLMFECHPQVCPAGEYCQNQCFTKRQYPETKIIKTDGKGWGLVAKRDIRKGEFVNEYVGELIDEEECMARIKYAHENDITHFYMLTIDKDRIIDAGPKGNYSRFMNHSCQPNCETLKWTVNGDTRVGLFAVCDIPAGTELTFNYNLDCLGNEKTVCRCGASNCSGFLGDRPKTSASLSSEEKGKKAKKKTRRRRAKGEGKRQSEDECFRCGDGGQLVLCDRKFCTKAYHLSCLGLGKRPFGKWECPWHHCDVCGKPSTSFCHLCPNSFCKEHQDGTAFRSTQDGQSYCCEHDLRADSSSSTKTEKPFPESLKSKGKRKKRRCWRRVTDGK.

Phosphothreonine occurs at positions 110 and 114. A Phosphoserine modification is found at S121. A disordered region spans residues 149–169 (ADVSQSEENEQKSDNKTRRNR). S172 carries the post-translational modification Phosphoserine. The region spanning 222–286 (VGDLVWSKVS…FEKSLVAFEG (65 aa)) is the PWWP 1 domain. Disordered stretches follow at residues 373 to 455 (MVDS…RKGD), 513 to 567 (QSEE…DKTA), and 594 to 658 (CKPL…SKKS). S376 is subject to Phosphoserine. T422 carries the post-translational modification Phosphothreonine. The segment at residues 453–521 (KGDSAAQFLV…AQSEEDSGNG (69 aa)) is a DNA-binding region (HMG box). Positions 552-567 (DKHSLRKRETITDKTA) are enriched in basic and acidic residues. The segment covering 603-623 (ASATASSALGFNKSSSPSASL) has biased composition (polar residues). The span at 632–648 (PGDEPSESPYESADETQ) shows a compositional bias: acidic residues. PHD-type zinc fingers lie at residues 667–713 (EYVC…CASG), 714–770 (IHSC…CHAS), and 831–875 (VSWC…CRAG). The 63-residue stretch at 880-942 (FQDIIWVKLG…QARVFPYMEG (63 aa)) folds into the PWWP 2 domain. The 51-residue stretch at 1011–1061 (SEIPKCNCKPTDENPCGSDSECLNRMLMFECHPQVCPAGEYCQNQCFTKRQ) folds into the AWS domain. Residues C1016, C1018, C1026, C1032, C1041, C1046, and C1052 each contribute to the Zn(2+) site. An SET domain is found at 1063-1180 (PETKIIKTDG…AGTELTFNYN (118 aa)). S-adenosyl-L-methionine contacts are provided by residues W1075, 1115-1118 (THFY), and 1141-1142 (NH). C1144 contacts Zn(2+). S-adenosyl-L-methionine is bound at residue N1186. The Post-SET domain maps to 1187-1203 (EKTVCRCGASNCSGFLG). C1191 provides a ligand contact to Zn(2+). An S-adenosyl-L-methionine-binding site is contributed by R1192. Zn(2+)-binding residues include C1193 and C1198. Positions 1206-1232 (PKTSASLSSEEKGKKAKKKTRRRRAKG) are disordered. Residues 1219–1230 (KKAKKKTRRRRA) are compositionally biased toward basic residues. The PHD-type 4; atypical zinc finger occupies 1239-1286 (EDECFRCGDGGQLVLCDRKFCTKAYHLSCLGLGKRPFGKWECPWHHCD). The disordered stretch occupies residues 1329-1365 (RADSSSSTKTEKPFPESLKSKGKRKKRRCWRRVTDGK). Basic residues predominate over residues 1348–1359 (SKGKRKKRRCWR).

This sequence belongs to the class V-like SAM-binding methyltransferase superfamily. Histone-lysine methyltransferase family. SET2 subfamily. In terms of assembly, interacts with HDAC1. Interacts (via PHD-type zinc fingers 1, 2 and 3) with SALL1. Interacts (via PHD-type 1, 2 and 3) with SALL4. Interacts with NANOG. Interacts with OGT. Interacts (via HMG box) with NKX2-5. As to expression, during B-cell development, expressed in early B2 cell progenitors (pre- and pro-B cells) with a decrease in expression at later stages.

The protein localises to the nucleus. Its subcellular location is the chromosome. The catalysed reaction is L-lysyl(36)-[histone H3] + S-adenosyl-L-methionine = N(6)-methyl-L-lysyl(36)-[histone H3] + S-adenosyl-L-homocysteine + H(+). The enzyme catalyses L-lysyl(36)-[histone H3] + 2 S-adenosyl-L-methionine = N(6),N(6)-dimethyl-L-lysyl(36)-[histone H3] + 2 S-adenosyl-L-homocysteine + 2 H(+). In terms of biological role, histone methyltransferase which specifically dimethylates nucleosomal histone H3 at 'Lys-36' (H3K36me2). Also monomethylates nucleosomal histone H3 at 'Lys-36' (H3K36me) in vitro. Does not trimethylate nucleosomal histone H3 at 'Lys-36' (H3K36me3). However, specifically trimethylates histone H3 at 'Lys-36' (H3K36me3) at euchromatic regions in embryonic stem (ES) cells. By methylating histone H3 at 'Lys-36', involved in the regulation of gene transcription during various biological processes. In ES cells, associates with developmental transcription factors such as SALL1 and represses inappropriate gene transcription mediated by histone deacetylation. During heart development, associates with transcription factor NKX2-5 to repress transcription of NKX2-5 target genes. Plays an essential role in adipogenesis, by regulating expression of genes involved in pre-adipocyte differentiation. During T-cell receptor (TCR) and CD28-mediated T-cell activation, promotes the transcription of transcription factor BCL6 which is required for follicular helper T (Tfh) cell differentiation. During B-cell development, required for the generation of the B1 lineage. During B2 cell activation, may contribute to the control of isotype class switch recombination (CRS), splenic germinal center formation, and the humoral immune response. Plays a role in class switch recombination of the immunoglobulin heavy chain (IgH) locus during B-cell activation. By regulating the methylation of histone H3 at 'Lys-36' and histone H4 at 'Lys-20' at the IgH locus, involved in TP53BP1 recruitment to the IgH switch region and promotes the transcription of IgA. Its function is as follows. Histone methyltransferase which specifically dimethylates nucleosomal histone H3 at 'Lys-36' (H3K36me2). Mono-, di- and tri-methylates histone H3 at 'Lys-27' (H3K27me, H3K27me2, H3K27me3). Methylation of histone H3 at 'Lys-27' is controversial. May act as a transcription regulator that binds DNA and suppresses IL5 transcription through HDAC recruitment. This Mus musculus (Mouse) protein is Histone-lysine N-methyltransferase NSD2 (Nsd2).